A 362-amino-acid polypeptide reads, in one-letter code: Protein BIG GRAIN 1-like D (362 aa).

Disordered stretches follow at residues 22–113, 132–168, and 303–327; these read IDPK…TLFH, KFNRHDENWENTRNRRSVKSSGNQKKPKTPASPGGRI, and VKTNGFEDYEDDDEDDDDDDVASDS. Positions 23-47 are enriched in polar residues; that stretch reads DPKTQKTQPYVGSVNTTTKKQSIVT. Over residues 50 to 60 the composition is skewed to basic and acidic residues; the sequence is VPDRKIHRDRF. Residues 63–78 are compositionally biased toward low complexity; sequence SVSSSSDSNSSIFSSS. The span at 132 to 144 shows a compositional bias: basic and acidic residues; it reads KFNRHDENWENTR. A compositionally biased stretch (acidic residues) spans 309-324; it reads EDYEDDDEDDDDDDVA.

The protein belongs to the BIG GRAIN 1 (BG1) plant protein family.

The protein localises to the cell membrane. Involved in auxin transport. Regulator of the auxin signaling pathway. The sequence is that of Protein BIG GRAIN 1-like D from Arabidopsis thaliana (Mouse-ear cress).